Consider the following 199-residue polypeptide: Cytochrome c oxidase subunit 2 (199 aa).

Residues 1-13 traverse the membrane as a helical segment; sequence AICSLVLYLLTLM. The Mitochondrial matrix portion of the chain corresponds to 14 to 26; sequence LMEKLSSNTVDAQ. The helical transmembrane segment at 27-54 threads the bilayer; the sequence is EVELIWTILPAIVLILLALPSLQILYMM. Residues 55-199 are Mitochondrial intermembrane-facing; sequence DEIDEPDLTL…SSLLSISSSL (145 aa). Residues His128, Cys163, Glu165, Cys167, His171, and Met174 each contribute to the Cu cation site. A Mg(2+)-binding site is contributed by Glu165.

The protein belongs to the cytochrome c oxidase subunit 2 family. In terms of assembly, component of the cytochrome c oxidase (complex IV, CIV), a multisubunit enzyme composed of 14 subunits. The complex is composed of a catalytic core of 3 subunits MT-CO1, MT-CO2 and MT-CO3, encoded in the mitochondrial DNA, and 11 supernumerary subunits COX4I, COX5A, COX5B, COX6A, COX6B, COX6C, COX7A, COX7B, COX7C, COX8 and NDUFA4, which are encoded in the nuclear genome. The complex exists as a monomer or a dimer and forms supercomplexes (SCs) in the inner mitochondrial membrane with NADH-ubiquinone oxidoreductase (complex I, CI) and ubiquinol-cytochrome c oxidoreductase (cytochrome b-c1 complex, complex III, CIII), resulting in different assemblies (supercomplex SCI(1)III(2)IV(1) and megacomplex MCI(2)III(2)IV(2)). Found in a complex with TMEM177, COA6, COX18, COX20, SCO1 and SCO2. Interacts with TMEM177 in a COX20-dependent manner. Interacts with COX20. Interacts with COX16. Requires Cu cation as cofactor.

The protein localises to the mitochondrion inner membrane. It carries out the reaction 4 Fe(II)-[cytochrome c] + O2 + 8 H(+)(in) = 4 Fe(III)-[cytochrome c] + 2 H2O + 4 H(+)(out). Component of the cytochrome c oxidase, the last enzyme in the mitochondrial electron transport chain which drives oxidative phosphorylation. The respiratory chain contains 3 multisubunit complexes succinate dehydrogenase (complex II, CII), ubiquinol-cytochrome c oxidoreductase (cytochrome b-c1 complex, complex III, CIII) and cytochrome c oxidase (complex IV, CIV), that cooperate to transfer electrons derived from NADH and succinate to molecular oxygen, creating an electrochemical gradient over the inner membrane that drives transmembrane transport and the ATP synthase. Cytochrome c oxidase is the component of the respiratory chain that catalyzes the reduction of oxygen to water. Electrons originating from reduced cytochrome c in the intermembrane space (IMS) are transferred via the dinuclear copper A center (CU(A)) of subunit 2 and heme A of subunit 1 to the active site in subunit 1, a binuclear center (BNC) formed by heme A3 and copper B (CU(B)). The BNC reduces molecular oxygen to 2 water molecules using 4 electrons from cytochrome c in the IMS and 4 protons from the mitochondrial matrix. In Casuarius bennetti (Dwarf cassowary), this protein is Cytochrome c oxidase subunit 2 (MT-CO2).